The chain runs to 506 residues: Allantoinase (506 aa).

Zn(2+) is bound by residues His-105, His-107, Lys-195, His-231, His-292, and Asp-366. An N6-carboxylysine modification is found at Lys-195.

Belongs to the metallo-dependent hydrolases superfamily. Allantoinase family. As to quaternary structure, homotetramer. Zn(2+) is required as a cofactor. In terms of processing, carboxylation allows a single lysine to coordinate two zinc ions.

The catalysed reaction is (S)-allantoin + H2O = allantoate + H(+). Its pathway is nitrogen metabolism; (S)-allantoin degradation; allantoate from (S)-allantoin: step 1/1. Its function is as follows. Catalyzes the conversion of allantoin (5-ureidohydantoin) to allantoate by hydrolytic cleavage of the five-member hydantoin ring. Catalyzes the first step of the ureide allantoin degradation followed by the sequential activity of AAH, UGLYAH and UAH which allows a complete purine breakdown without the intermediate generation of urea. The chain is Allantoinase (ALN) from Arabidopsis thaliana (Mouse-ear cress).